The sequence spans 199 residues: Holliday junction branch migration complex subunit RuvA (199 aa).

The tract at residues 1-65 is domain I; sequence MIGWLHGQII…EDALLLYGFL (65 aa). The domain II stretch occupies residues 66–144; the sequence is DKEERSLFRS…QFDGSVSDTF (79 aa). Positions 144–148 are flexible linker; that stretch reads FQKQA. A domain III region spans residues 149–199; the sequence is GSTHSQQEAISALEALGYKPQEAWKVMNKIDNGNKSCEQLIREALQILSSR.

This sequence belongs to the RuvA family. In terms of assembly, homotetramer. Forms an RuvA(8)-RuvB(12)-Holliday junction (HJ) complex. HJ DNA is sandwiched between 2 RuvA tetramers; dsDNA enters through RuvA and exits via RuvB. An RuvB hexamer assembles on each DNA strand where it exits the tetramer. Each RuvB hexamer is contacted by two RuvA subunits (via domain III) on 2 adjacent RuvB subunits; this complex drives branch migration. In the full resolvosome a probable DNA-RuvA(4)-RuvB(12)-RuvC(2) complex forms which resolves the HJ.

The protein resides in the cytoplasm. In terms of biological role, the RuvA-RuvB-RuvC complex processes Holliday junction (HJ) DNA during genetic recombination and DNA repair, while the RuvA-RuvB complex plays an important role in the rescue of blocked DNA replication forks via replication fork reversal (RFR). RuvA specifically binds to HJ cruciform DNA, conferring on it an open structure. The RuvB hexamer acts as an ATP-dependent pump, pulling dsDNA into and through the RuvAB complex. HJ branch migration allows RuvC to scan DNA until it finds its consensus sequence, where it cleaves and resolves the cruciform DNA. This is Holliday junction branch migration complex subunit RuvA from Legionella pneumophila subsp. pneumophila (strain Philadelphia 1 / ATCC 33152 / DSM 7513).